A 203-amino-acid polypeptide reads, in one-letter code: Glycerol-3-phosphate acyltransferase (203 aa).

The next 5 helical transmembrane spans lie at 13-33 (TLACLVFGYLLGSIPFGLILT), 62-82 (LAAATLLFDALKGTAAAAIAS), 88-108 (AGIAAGFAAFLGHLFPVWLSF), 118-138 (IGVLLGLMPVMVLLFAAIWLA), and 159-179 (IALYAAGNGKVAGLFAVMTAI).

It belongs to the PlsY family. As to quaternary structure, probably interacts with PlsX.

The protein localises to the cell inner membrane. The catalysed reaction is an acyl phosphate + sn-glycerol 3-phosphate = a 1-acyl-sn-glycero-3-phosphate + phosphate. The protein operates within lipid metabolism; phospholipid metabolism. Its function is as follows. Catalyzes the transfer of an acyl group from acyl-phosphate (acyl-PO(4)) to glycerol-3-phosphate (G3P) to form lysophosphatidic acid (LPA). This enzyme utilizes acyl-phosphate as fatty acyl donor, but not acyl-CoA or acyl-ACP. The chain is Glycerol-3-phosphate acyltransferase from Rhizobium meliloti (strain 1021) (Ensifer meliloti).